A 745-amino-acid polypeptide reads, in one-letter code: Probable xanthine dehydrogenase subunit D (745 aa).

Mo-molybdopterin contacts are provided by Q204, F235, and A508.

Belongs to the xanthine dehydrogenase family. As to quaternary structure, could be composed of four subunits: PucA, PucC, PucD and PucE. Mo-molybdopterin serves as cofactor.

The enzyme catalyses xanthine + NAD(+) + H2O = urate + NADH + H(+). It catalyses the reaction hypoxanthine + NAD(+) + H2O = xanthine + NADH + H(+). The protein operates within purine metabolism; hypoxanthine degradation; urate from hypoxanthine: step 1/2. Its pathway is purine metabolism; hypoxanthine degradation; urate from hypoxanthine: step 2/2. Oxidizes hypoxanthine and xanthine to uric acid. The sequence is that of Probable xanthine dehydrogenase subunit D (pucD) from Bacillus subtilis (strain 168).